We begin with the raw amino-acid sequence, 1072 residues long: Teashirt homolog 3 (1072 aa).

3 disordered regions span residues 44–71, 130–153, and 228–247; these read ACPS…SETS, PSSE…CGSG, and HYRD…WSKP. Residues 57–71 show a composition bias toward basic and acidic residues; the sequence is SSHEMDSESHISETS. 2 consecutive C2H2-type zinc fingers follow at residues 204–228 and 265–289; these read FRCK…ETGH and LKCM…KTKH. Over residues 228 to 237 the composition is skewed to basic and acidic residues; it reads HYRDDNHETD. Positions 315–336 are disordered; sequence SLELELPSSPDSTGGTPKATLS. Residues 376–400 form a C2H2-type 3; atypical zinc finger; that stretch reads LKCMECGSSHDTLQELTAHMMVTGH. Residues 469–481 are compositionally biased toward basic and acidic residues; it reads AVLDEKPKEKEKA. Disordered stretches follow at residues 469 to 489, 569 to 594, 616 to 690, 784 to 815, and 846 to 888; these read AVLD…EKYD, NSEI…PMPK, EKMK…PLSG, TKGK…TVTT, and TESH…RQSN. 2 stretches are compositionally biased toward polar residues: residues 571 to 593 and 649 to 660; these read EIVS…SPMP and SSGSGFKSQENS. At serine 672 the chain carries Phosphoserine. Composition is skewed to low complexity over residues 791–815 and 847–860; these read GCSL…TVTT and ESHT…SSIS. Residues 882–952 constitute a DNA-binding region (homeobox; atypical); sequence RKGRQSNWNP…NVKYQLRRTG (71 aa). 2 C2H2-type zinc fingers span residues 967–989 and 1032–1055; these read FFCN…LESH and YQCK…SKTH.

The protein belongs to the teashirt C2H2-type zinc-finger protein family. In terms of assembly, interacts (via N-terminus) with HDAC1 and HDAC2; the interaction is direct. Found in a trimeric complex with APBB1 and HDAC1; the interaction between HDAC1 and APBB1 is mediated by TSHZ3. Interacts (via homeobox domain) with APBB1 (via PID domain 1). As to expression, expressed in cortical neurons.

It is found in the nucleus. The protein localises to the cell projection. Its subcellular location is the growth cone. Its function is as follows. Transcriptional regulator involved in developmental processes. Functions in association with APBB1, SET and HDAC factors as a transcriptional repressor, that inhibits the expression of CASP4. TSHZ3-mediated transcription repression involves the recruitment of histone deacetylases HDAC1 and HDAC2. Associates with chromatin in a region surrounding the CASP4 transcriptional start site(s). Regulates the development of neurons involved in both respiratory rhythm and airflow control. Promotes maintenance of nucleus ambiguus (nA) motoneurons, which govern upper airway function, and establishes a respiratory rhythm generator (RRG) activity compatible with survival at birth. Involved in the differentiation of the proximal uretic smooth muscle cells during developmental processes. Involved in the up-regulation of myocardin, that directs the expression of smooth muscle cells in the proximal ureter. Involved in the modulation of glutamatergic synaptic transmission and long-term synaptic potentiation. This chain is Teashirt homolog 3 (Tshz3), found in Rattus norvegicus (Rat).